Reading from the N-terminus, the 255-residue chain is Hydroxyacylglutathione hydrolase (255 aa).

Zn(2+)-binding residues include His-56, His-58, Asp-60, His-61, His-114, Asp-133, and His-171.

It belongs to the metallo-beta-lactamase superfamily. Glyoxalase II family. As to quaternary structure, monomer. It depends on Zn(2+) as a cofactor.

It carries out the reaction an S-(2-hydroxyacyl)glutathione + H2O = a 2-hydroxy carboxylate + glutathione + H(+). The protein operates within secondary metabolite metabolism; methylglyoxal degradation; (R)-lactate from methylglyoxal: step 2/2. Its function is as follows. Thiolesterase that catalyzes the hydrolysis of S-D-lactoyl-glutathione to form glutathione and D-lactic acid. This chain is Hydroxyacylglutathione hydrolase, found in Ruegeria pomeroyi (strain ATCC 700808 / DSM 15171 / DSS-3) (Silicibacter pomeroyi).